Here is a 1193-residue protein sequence, read N- to C-terminus: DNA polymerase (1193 aa).

The tract at residues 1-88 (MALVQTHGSR…PAKKKRGTVV (88 aa)) is disordered. Residues 48-68 (PATTASGSRAAPTARRASSPP) are compositionally biased toward low complexity.

The protein belongs to the DNA polymerase type-B family. As to quaternary structure, heterodimer with the terminal protein; this heterodimer binds to bp 9 to 18 of the genome. Forms a complex with viral pTP, DBP and hosts NFIA and POU2F1/OCT1 for initiation of replication.

The protein resides in the host nucleus. The catalysed reaction is DNA(n) + a 2'-deoxyribonucleoside 5'-triphosphate = DNA(n+1) + diphosphate. Its function is as follows. Eukaryotic-type DNA polymerase involved in viral genomic replication. DNA synthesis is protein primed, and acts in a strand displacement replication. Assembles in complex with viral pTP, DBP, host NFIA and host POU2F1/OCT1 on viral origin of replication. The polymerase covalently transfers dCMP onto pTP, thereby initiating complementary strand synthesis. In Homo sapiens (Human), this protein is DNA polymerase.